The chain runs to 265 residues: 3-methyl-2-oxobutanoate hydroxymethyltransferase (265 aa).

Mg(2+) is bound by residues D41 and D80. Residues D41–S42, D80, and K109 contribute to the 3-methyl-2-oxobutanoate site. E111 serves as a coordination point for Mg(2+). E178 acts as the Proton acceptor in catalysis.

This sequence belongs to the PanB family. Homodecamer; pentamer of dimers. Mg(2+) is required as a cofactor.

The protein resides in the cytoplasm. The enzyme catalyses 3-methyl-2-oxobutanoate + (6R)-5,10-methylene-5,6,7,8-tetrahydrofolate + H2O = 2-dehydropantoate + (6S)-5,6,7,8-tetrahydrofolate. Its pathway is cofactor biosynthesis; (R)-pantothenate biosynthesis; (R)-pantoate from 3-methyl-2-oxobutanoate: step 1/2. Its function is as follows. Catalyzes the reversible reaction in which hydroxymethyl group from 5,10-methylenetetrahydrofolate is transferred onto alpha-ketoisovalerate to form ketopantoate. The polypeptide is 3-methyl-2-oxobutanoate hydroxymethyltransferase (Thermosipho africanus (strain TCF52B)).